We begin with the raw amino-acid sequence, 204 residues long: Protein C (204 aa).

A disordered region spans residues 1–78 (MPSFLRGILK…TEQSQRRPKI (78 aa)). Basic and acidic residues predominate over residues 10 to 20 (KPKERHHENKN). A compositionally biased stretch (low complexity) spans 25 to 34 (SSDSLTSSYP).

This sequence belongs to the respirovirus protein C family.

This chain is Protein C (P/V/C), found in Homo sapiens (Human).